The chain runs to 1557 residues: MEPTINPPVNLPPPVPSRSNLSLNYSNNNTNNTNNTNNTNDFKKKLQFQLQSSPSSPSSPSPSIIYKKTPAVNNNNNNNNNNNHINNGNVNGIGPGGGNSYISSPQSSPIHTSSNGISYTVTTNSPPLLPVDNSSGYNNNLNSTFVETLSSSSPSPIKTTTTPPPPVPSKSKSKSSEKLSVKLLKSNSKPSLNDLYQQQQQQSNPNSPTTPPSNCNIESIQPPSSSSSSTTPSTSPQLPAIYSKYSKISLPQLPLPPFLPPSPLVQSTSSPSFSSLILPLPSSPLPPPPLTIPNKVPPLPMRLPPPPPPQQLDQMYSNNNQQQQQQQQQQQNNESNSTTTSEGGLTPESESKLYEIASQPPSTPRLTHESKVIPSEIELLIKFYPSPSLSSGSLLTIPSTIEKSFIFSPCSTVDEILSIIIPNFQFHNGLKCFAKHTFNNEWEATHNDPAAASSSIIDDHESFALFNQKSPTIPLHKEKTILELSLHDRDVLILKTVSLVFTLVKVQIPHFTENSLSATATVKFNQFTSIRSIIRKLYLKYHNNVDISRHGIFLINDNNNNNNNNNNNNNNNNNNNNNNNNNNNNNNNNNNNNNNNNNNNNNNNNNNNNNLHQQQDELSSSIQLEEEELFSTYNINSNSNLVFRTISNQENDILNSSQKILNLKILISSTFSRNNTLNLMFDPRDSVSKAIKVTGLRTGLLDSLNKCGFYLTPSEDDDEGFWMDEELTLEMYNLKNHTFLSFKERCKKYTILIKMGGASNGNGNGDLTWRKCTFKFDQFTKVSTLFNILINNENIKNPKDYHLVVKSTGTSLEKHRYLWSYDIKSPYEIEFKEYPNKLLIFNPQNGEKNFVYVDFNEPIKDVCARLSQTFSSPIDFGSISTNNNNNNNNNNNINSNSNGSSGAGGANSNALTSSTNSASTTSSSTPTTPELPPQVNHVRERSYTFKRLGQLNNTIDSRKSLKDQGVLPNDALMLEVIQDDSIATNNNNNNNNNNSNTTTTIKDKKINRNSLPSSTTMVFEDLVKDGTILSEERQINIWDEPADSNGNIIYSKTVTNNLNAEIDAATLNKLIIRLTNPVFHDLTFMKTFLMTYSSYTTTTTLLKKLFERFQVPTHIDERERLSAQLRVANVIKYWVEHHYEDFCHESTKLMVDFVDTHMMIAFPTLGVQIRNCILKRTCGFKSELVRTRSNGALTSPRTNLSLSFTNLNNSSVGSIANTSSSTSTSSTSSLLSSTNSISISSSLSLSFNSGINSPSISQNTPSSPSLIPSSPRPITSSSSVSSSTLLKSPLSQQAKSRIPETKTKGFANPRNLFDFDDEEIARQLTLYDFQLYTAIKPTEFLNQAWNKPSMASRKSPTILKIISRFNDISLWVVSLILEPDRVKTRAKRLKRIISIADELRKLNNYNTCIAVISGINNSAILRLKYTRGLLSKKYLDILENLEKEMSCEGSYKNYRDKLKNSDPPVVPYIGVYLTDLTFIEEGNPNIIRGNLINFAKYYLIYRVISEIQQYQWTEYQLNVAPIIQTFIRDVSISSTSDDLYHLSLLKEPRNALKSDIF.

Positions 1-16 (MEPTINPPVNLPPPVP) are enriched in pro residues. 6 disordered regions span residues 1–121 (MEPT…SYTV), 146–181 (VETL…KLSV), 195–238 (LYQQ…SPQL), 283–347 (SPLP…GLTP), 558–619 (NNNN…DELS), and 881–937 (TNNN…QVNH). Low complexity-rich tracts occupy residues 17–40 (SRSN…NNTN), 52–63 (SSPSSPSSPSPS), 73–90 (NNNN…NGNV), 102–114 (ISSP…HTSS), 148–161 (TLSS…KTTT), 195–207 (LYQQ…NPNS), and 222–236 (PPSS…STSP). Positions 283–310 (SPLPPPPLTIPNKVPPLPMRLPPPPPPQ) are enriched in pro residues. 2 coiled-coil regions span residues 310-338 (QQLD…SNST) and 591-629 (NNNN…EEEL). Residues 311-333 (QLDQMYSNNNQQQQQQQQQQQNN) are compositionally biased toward low complexity. The span at 334-343 (ESNSTTTSEG) shows a compositional bias: polar residues. Low complexity-rich tracts occupy residues 558 to 610 (NNNN…NNNN) and 881 to 928 (TNNN…TPTT). Positions 1058–1177 (LNAEIDAATL…QIRNCILKRT (120 aa)) constitute an N-terminal Ras-GEF domain. The tract at residues 1254–1303 (PSISQNTPSSPSLIPSSPRPITSSSSVSSSTLLKSPLSQQAKSRIPETKT) is disordered. Residues 1261–1291 (PSSPSLIPSSPRPITSSSSVSSSTLLKSPLS) show a composition bias toward low complexity. A Ras-GEF domain is found at 1316–1549 (DDEEIARQLT…YHLSLLKEPR (234 aa)).

Promotes the exchange of Ras-bound GDP by GTP. This Dictyostelium discoideum (Social amoeba) protein is Ras guanine nucleotide exchange factor K (gefK).